The primary structure comprises 248 residues: DnaA regulatory inactivator Hda (248 aa).

It belongs to the DnaA family. HdA subfamily. As to quaternary structure, the active form seems to be an ADP-bound monomer. Forms the RIDA complex (regulatory inactivation of DnaA) of ATP-DnaA, ADP-Hda and the DNA-loaded beta sliding clamp (dnaN).

Functionally, mediates the interaction of DNA replication initiator protein DnaA with DNA polymerase subunit beta sliding clamp (dnaN). Stimulates hydrolysis of ATP-DnaA to ADP-DnaA, rendering DnaA inactive for reinitiation, a process called regulatory inhibition of DnaA or RIDA. In Proteus mirabilis (strain HI4320), this protein is DnaA regulatory inactivator Hda.